A 1021-amino-acid polypeptide reads, in one-letter code: Phytosulfokine receptor 1 (1021 aa).

A signal peptide spans 1–24 (MGVLRVYVILILVGFCVQIVVVNS). The stretch at 21 to 43 (VVNSQNLTCNSNDLKALEGFMRG) is one LRR 1 repeat. N-linked (GlcNAc...) asparagine glycans are attached at residues asparagine 26, asparagine 54, and asparagine 83. LRR repeat units lie at residues 85–109 (SGRV…VAKL), 110–133 (DQLK…LLNL), 135–156 (NLEV…LINL), 158–180 (SLRV…LCNN), 181–205 (LPRI…IGNC), 206–229 (SSVE…LFQL), 231–252 (NLSV…KLGK), 253–277 (LSNL…FLEL), 301–325 (SRSI…CSAM), 326–349 (TNLT…LPNC), 351–372 (RLKT…SFKN), 373–397 (FQSL…EILQ), 402–426 (LKTL…QFKN), 428–448 (KVLI…LSNS), 449–474 (PSLQ…SLNS), and 476–496 (FYLD…LTSL). 2 N-linked (GlcNAc...) asparagine glycosylation sites follow: asparagine 116 and asparagine 132. N-linked (GlcNAc...) asparagine glycosylation is found at asparagine 204, asparagine 217, and asparagine 231. Residues asparagine 311, asparagine 321, and asparagine 327 are each glycosylated (N-linked (GlcNAc...) asparagine). Residues asparagine 383 and asparagine 388 are each glycosylated (N-linked (GlcNAc...) asparagine). Asparagine 482, asparagine 546, asparagine 568, asparagine 576, and asparagine 592 each carry an N-linked (GlcNAc...) asparagine glycan. The LRR 18; atypical repeat unit spans residues 498-555 (SLVSKENAVEEPSPDFPFFKKKNTNAGGLQYNQPSSFPPMIDLSYNSLNGSIWPEFGD). LRR repeat units lie at residues 556 to 580 (LRQL…LSGM), 581 to 604 (TSLE…LVKL), and 606 to 629 (FLST…QFQT). A glycan (N-linked (GlcNAc...) asparagine) is linked at asparagine 632. A helical transmembrane segment spans residues 673–693 (VAVGTGLGTVFLLTVTLLIIL). The region spanning 743-1014 (FNQANIIGCG…PTTQQLVSWL (272 aa)) is the Protein kinase domain. Residues 749-757 (IGCGGFGLV) and lysine 771 contribute to the ATP site. Aspartate 869 acts as the Proton acceptor in catalysis.

It belongs to the protein kinase superfamily. Ser/Thr protein kinase family. In terms of processing, N-glycosylated. Expressed ubiquitously in leaf, apical meristem, hypocotyl and root.

Its subcellular location is the cell membrane. The catalysed reaction is L-seryl-[protein] + ATP = O-phospho-L-seryl-[protein] + ADP + H(+). It catalyses the reaction L-threonyl-[protein] + ATP = O-phospho-L-threonyl-[protein] + ADP + H(+). Functionally, phytosulfokine receptor with a serine/threonine-protein kinase activity. Regulates, in response to phytosulfokine binding, a signaling cascade involved in plant cell differentiation, organogenesis and somatic embryogenesis. This Daucus carota (Wild carrot) protein is Phytosulfokine receptor 1 (PSKR).